Reading from the N-terminus, the 282-residue chain is 2-dehydro-3-deoxyphosphooctonate aldolase (282 aa).

This sequence belongs to the KdsA family.

Its subcellular location is the cytoplasm. The catalysed reaction is D-arabinose 5-phosphate + phosphoenolpyruvate + H2O = 3-deoxy-alpha-D-manno-2-octulosonate-8-phosphate + phosphate. Its pathway is carbohydrate biosynthesis; 3-deoxy-D-manno-octulosonate biosynthesis; 3-deoxy-D-manno-octulosonate from D-ribulose 5-phosphate: step 2/3. The protein operates within bacterial outer membrane biogenesis; lipopolysaccharide biosynthesis. The polypeptide is 2-dehydro-3-deoxyphosphooctonate aldolase (Shewanella pealeana (strain ATCC 700345 / ANG-SQ1)).